Here is a 501-residue protein sequence, read N- to C-terminus: Cytochrome P450 2S1 (501 aa).

Position 441 (Cys-441) interacts with heme.

This sequence belongs to the cytochrome P450 family. Requires heme as cofactor.

The protein resides in the endoplasmic reticulum membrane. It is found in the microsome membrane. It carries out the reaction all-trans-retinoate + reduced [NADPH--hemoprotein reductase] + O2 = all-trans-5,6-epoxyretinoate + oxidized [NADPH--hemoprotein reductase] + H2O + H(+). The enzyme catalyses all-trans-retinoate + reduced [NADPH--hemoprotein reductase] + O2 = all-trans-4-hydroxyretinoate + oxidized [NADPH--hemoprotein reductase] + H2O + H(+). The catalysed reaction is (5S)-hydroperoxy-(6E,8Z,11Z,14Z)-eicosatetraenoate = 5-oxo-(6E,8Z,11Z,14Z)-eicosatetraenoate + H2O. It catalyses the reaction (12S)-hydroperoxy-(5Z,8Z,10E,14Z)-eicosatetraenoate = 12-oxo-(5Z,8Z,10E,14Z)-eicosatetraenoate + H2O. It carries out the reaction (15S)-hydroperoxy-(5Z,8Z,11Z,13E)-eicosatetraenoate = 15-oxo-(5Z,8Z,11Z,13E)-eicosatetraenoate + H2O. The enzyme catalyses prostaglandin H2 = thromboxane A2. The catalysed reaction is prostaglandin H2 = (12S)-hydroxy-(5Z,8E,10E)-heptadecatrienoate + malonaldehyde. It catalyses the reaction (13S)-hydroperoxy-(9Z,11E)-octadecadienoate = 13-oxo-(9Z,11E)-octadecadienoate + H2O. It participates in lipid metabolism; fatty acid metabolism. A cytochrome P450 monooxygenase involved in the metabolism of retinoids and eicosanoids. In epidermis, may contribute to the oxidative metabolism of all-trans-retinoic acid. For this activity, uses molecular oxygen inserting one oxygen atom into a substrate, and reducing the second into a water molecule, with two electrons provided by NADPH via cytochrome P450 reductase (NADPH--hemoprotein reductase). Additionally, displays peroxidase and isomerase activities toward various oxygenated eicosanoids such as prostaglandin H2 (PGH2) and hydroperoxyeicosatetraenoates (HPETEs). Independently of cytochrome P450 reductase, NADPH, and O2, catalyzes the breakdown of PGH2 to hydroxyheptadecatrienoic acid (HHT) and malondialdehyde (MDA), which is known to act as a mediator of DNA damage. In Mus musculus (Mouse), this protein is Cytochrome P450 2S1 (Cyp2s1).